Reading from the N-terminus, the 146-residue chain is Large ribosomal subunit protein uL15 (146 aa).

Basic and acidic residues predominate over residues 1–13 (MKLHELKPAEGSR). A disordered region spans residues 1–51 (MKLHELKPAEGSRKVRNRVGRGTSSGNGKTSGRGQKGQKARSGGGVRLGFE). Composition is skewed to gly residues over residues 23–35 (TSSG…GRGQ) and 42–51 (SGGGVRLGFE).

The protein belongs to the universal ribosomal protein uL15 family. As to quaternary structure, part of the 50S ribosomal subunit.

In terms of biological role, binds to the 23S rRNA. The chain is Large ribosomal subunit protein uL15 from Streptococcus pneumoniae serotype 2 (strain D39 / NCTC 7466).